Reading from the N-terminus, the 912-residue chain is DNA ligase 4 (912 aa).

Positions 271, 272, 273, 274, 278, 331, 345, 367, 427, 432, 449, and 451 each coordinate ATP. K273 serves as the catalytic N6-AMP-lysine intermediate. E331 is a binding site for Mg(2+). Residue E427 coordinates Mg(2+). The required for catalytic activity stretch occupies residues 610–620 (LATKHLHVGDD). BRCT domains are found at residues 654-743 (KVSN…PRFM) and 846-912 (LRFH…QYLL).

This sequence belongs to the ATP-dependent DNA ligase family. As to quaternary structure, interacts with XRCC4; the LIG4-XRCC4 subcomplex has a 1:2 stoichiometry and XRCC4 is required for LIG4 stability. Component of the core long-range non-homologous end joining (NHEJ) complex (also named DNA-PK complex) composed of PRKDC, LIG4, XRCC4, XRCC6/Ku70, XRCC5/Ku86 and NHEJ1/XLF. Additional component of the NHEJ complex includes PAXX. Following autophosphorylation, PRKDC dissociates from DNA, leading to formation of the short-range NHEJ complex, composed of LIG4, XRCC4, XRCC6/Ku70, XRCC5/Ku86 and NHEJ1/XLF. Interacts with DCLRE1C; the interaction is direct. Interacts with APLF. Requires Mg(2+) as cofactor.

Its subcellular location is the nucleus. It carries out the reaction ATP + (deoxyribonucleotide)n-3'-hydroxyl + 5'-phospho-(deoxyribonucleotide)m = (deoxyribonucleotide)n+m + AMP + diphosphate.. Functionally, DNA ligase involved in DNA non-homologous end joining (NHEJ); required for double-strand break (DSB) repair and V(D)J recombination. Catalyzes the NHEJ ligation step of the broken DNA during DSB repair by resealing the DNA breaks after the gap filling is completed. Joins single-strand breaks in a double-stranded polydeoxynucleotide in an ATP-dependent reaction. LIG4 is mechanistically flexible: it can ligate nicks as well as compatible DNA overhangs alone, while in the presence of XRCC4, it can ligate ends with 2-nucleotides (nt) microhomology and 1-nt gaps. Forms a subcomplex with XRCC4; the LIG4-XRCC4 subcomplex is responsible for the NHEJ ligation step and XRCC4 enhances the joining activity of LIG4. Binding of the LIG4-XRCC4 complex to DNA ends is dependent on the assembly of the DNA-dependent protein kinase complex DNA-PK to these DNA ends. LIG4 regulates nuclear localization of XRCC4. In Cricetulus griseus (Chinese hamster), this protein is DNA ligase 4.